Here is a 74-residue protein sequence, read N- to C-terminus: Translation initiation factor IF-1 (74 aa).

The 72-residue stretch at 1–72 (MSKQDLIEME…TKGRITYRLR (72 aa)) folds into the S1-like domain.

This sequence belongs to the IF-1 family. In terms of assembly, component of the 30S ribosomal translation pre-initiation complex which assembles on the 30S ribosome in the order IF-2 and IF-3, IF-1 and N-formylmethionyl-tRNA(fMet); mRNA recruitment can occur at any time during PIC assembly.

It localises to the cytoplasm. Functionally, one of the essential components for the initiation of protein synthesis. Stabilizes the binding of IF-2 and IF-3 on the 30S subunit to which N-formylmethionyl-tRNA(fMet) subsequently binds. Helps modulate mRNA selection, yielding the 30S pre-initiation complex (PIC). Upon addition of the 50S ribosomal subunit IF-1, IF-2 and IF-3 are released leaving the mature 70S translation initiation complex. The protein is Translation initiation factor IF-1 of Trichodesmium erythraeum (strain IMS101).